The chain runs to 117 residues: MKKLLAIALTVLATVFAFGTPAFAADAAAGAQVFAANCAACHAGGNNAVMPTKTLKADALKTYLAGYKDGSKSLEEAVAYQVTNGQGAMPAFGGRLSDADIANVAAYIADQAENNKW.

The N-terminal stretch at 1 to 24 is a signal peptide; sequence MKKLLAIALTVLATVFAFGTPAFA. Residues Cys38, Cys41, His42, and Met89 each coordinate heme c.

This sequence belongs to the cytochrome c family. PetJ subfamily. Monomer. In terms of processing, binds 1 heme c group covalently per subunit.

The protein localises to the cellular thylakoid lumen. Its function is as follows. Functions as an electron carrier between membrane-bound cytochrome b6-f and photosystem I in oxygenic photosynthesis. This Picosynechococcus sp. (strain ATCC 27264 / PCC 7002 / PR-6) (Agmenellum quadruplicatum) protein is Cytochrome c6 (petJ).